Here is a 642-residue protein sequence, read N- to C-terminus: MISYGEQLSSPAVSPPLVRAGLRGPMMHGATFAYVPSPQALHRIPGTSAYAFPSLSPVALTEHGCPYGEARERHEPLPAKLALEEEQKPESGWAQELRRTAMTLLKLPLMVTFLYLFVCSLDVLSSAFQLAGGKVAGDIFKDNAILANPVAGLVVGILVTVLVQSSSTATSIIVSMVSSGLLEVSSAIPIIMGSNIGTSVTNTIVALMQAGDRTDFRRAFAGATVHDCFNWLSVLVLLPLEAATGYLHHVTGLVVASFNIRGGRDAPDLLKTITEPFTKLIIQLDRSVITSIATGDESLRNHSLIRIWCHRDPVEASTSMARAETNISRTHGNATMEKCNHIFVDTQLPDLAVGLILLAGSLVLLCTCLILLVKMLNSLLKGQVAKVIQKVINTDLPAPFTWVTGYFAMVVGAAMTFIVQSSSVFTSAITPLVGLGVISIERAYPLTLGSNIGTTTTAILAALASPREKLSSSFQIALCHFFFNISGILLWYPLPCTRLPIRMAKALGKRTAKYRWFAVLYLLVCFLLLPSLVFGISMAGWRAMVGVGAPFGALLAFVVLINVLQSRSPGRLPKWLQTWDFLPHWMHSLQPLDHLITHATLCCSRSEPRSPQLPARVFLEELPPATPSPRLALPAHHNATRL.

Over 1–106 (MISYGEQLSS…LRRTAMTLLK (106 aa)) the chain is Cytoplasmic. Serine 14 and serine 37 each carry phosphoserine. A helical membrane pass occupies residues 107-128 (LPLMVTFLYLFVCSLDVLSSAF). Residues 129–148 (QLAGGKVAGDIFKDNAILAN) are Extracellular-facing. A helical membrane pass occupies residues 149-166 (PVAGLVVGILVTVLVQSS). Residues 167–168 (ST) lie on the Cytoplasmic side of the membrane. Residues 169–188 (ATSIIVSMVSSGLLEVSSAI) form a helical membrane-spanning segment. At 189–350 (PIIMGSNIGT…HIFVDTQLPD (162 aa)) the chain is on the extracellular side. 2 disulfide bridges follow: cysteine 228/cysteine 525 and cysteine 309/cysteine 339. Asparagine 301, asparagine 326, and asparagine 333 each carry an N-linked (GlcNAc...) asparagine glycan. A helical membrane pass occupies residues 351–373 (LAVGLILLAGSLVLLCTCLILLV). At 374–415 (KMLNSLLKGQVAKVIQKVINTDLPAPFTWVTGYFAMVVGAAM) the chain is on the cytoplasmic side. The helical transmembrane segment at 416 to 439 (TFIVQSSSVFTSAITPLVGLGVIS) threads the bilayer. At 440-469 (IERAYPLTLGSNIGTTTTAILAALASPREK) the chain is on the extracellular side. A helical membrane pass occupies residues 470-490 (LSSSFQIALCHFFFNISGILL). At 491–516 (WYPLPCTRLPIRMAKALGKRTAKYRW) the chain is on the cytoplasmic side. The residue at position 511 (threonine 511) is a Phosphothreonine; by PKC. A helical membrane pass occupies residues 517–537 (FAVLYLLVCFLLLPSLVFGIS). Over 538 to 542 (MAGWR) the chain is Extracellular. A helical membrane pass occupies residues 543–564 (AMVGVGAPFGALLAFVVLINVL). Topologically, residues 565-642 (QSRSPGRLPK…LPAHHNATRL (78 aa)) are cytoplasmic. At serine 610 the chain carries Phosphoserine. A Phosphothreonine modification is found at threonine 626. At serine 628 the chain carries Phosphoserine.

It belongs to the SLC34A transporter family. As to quaternary structure, interacts via its C-terminal region with NHERF4. Interacts with NHERF1. Interacts with TMEM174; regulates SLC34A1 internalization by PTH and FGF23. Expressed in the kidney cortex.

The protein localises to the apical cell membrane. It is found in the cell membrane. The catalysed reaction is 3 Na(+)(out) + phosphate(out) = 3 Na(+)(in) + phosphate(in). Transport activity is significantly increased in response to dietary phosphate deprivation. In terms of biological role, involved in actively transporting phosphate into cells via Na(+) cotransport in the renal brush border membrane. The cotransport has a Na(+):Pi stoichiometry of 3:1 and is electrogenic. This chain is Sodium-dependent phosphate transport protein 2A, found in Oryctolagus cuniculus (Rabbit).